We begin with the raw amino-acid sequence, 380 residues long: Probable cytosolic iron-sulfur protein assembly protein 1 (380 aa).

WD repeat units follow at residues 10 to 49, 56 to 108, 135 to 175, 182 to 221, 228 to 275, 299 to 338, and 346 to 380; these read AHND…KFPL, THKR…VEYD, GHEN…EEFE, DHSQ…DEWS, GHEG…EEDK, VHKY…KWVI, and HGVH…LWNV.

Belongs to the WD repeat CIA1 family. In terms of assembly, interacts with NAR1.

Its subcellular location is the cytoplasm. The protein localises to the nucleus. Essential component of the cytosolic iron-sulfur (Fe/S) protein assembly machinery. Required for the maturation of extramitochondrial Fe/S proteins. The protein is Probable cytosolic iron-sulfur protein assembly protein 1 of Candida dubliniensis (strain CD36 / ATCC MYA-646 / CBS 7987 / NCPF 3949 / NRRL Y-17841) (Yeast).